Consider the following 492-residue polypeptide: Bifunctional purine biosynthesis protein PurH (492 aa).

The 144-residue stretch at 1–144 folds into the MGS-like domain; that stretch reads MKKAILSVSN…KNYKHVTTIV (144 aa).

This sequence belongs to the PurH family.

It carries out the reaction (6R)-10-formyltetrahydrofolate + 5-amino-1-(5-phospho-beta-D-ribosyl)imidazole-4-carboxamide = 5-formamido-1-(5-phospho-D-ribosyl)imidazole-4-carboxamide + (6S)-5,6,7,8-tetrahydrofolate. It catalyses the reaction IMP + H2O = 5-formamido-1-(5-phospho-D-ribosyl)imidazole-4-carboxamide. Its pathway is purine metabolism; IMP biosynthesis via de novo pathway; 5-formamido-1-(5-phospho-D-ribosyl)imidazole-4-carboxamide from 5-amino-1-(5-phospho-D-ribosyl)imidazole-4-carboxamide (10-formyl THF route): step 1/1. It functions in the pathway purine metabolism; IMP biosynthesis via de novo pathway; IMP from 5-formamido-1-(5-phospho-D-ribosyl)imidazole-4-carboxamide: step 1/1. This is Bifunctional purine biosynthesis protein PurH from Staphylococcus aureus (strain bovine RF122 / ET3-1).